The primary structure comprises 644 residues: Alkyldihydroxyacetonephosphate synthase, peroxisomal (644 aa).

Residues 1–44 (MAEAAGEAGASERDPDAVRARRRLRVLSGHLLGRPQEAPSTNEC) constitute a peroxisome transit peptide. A disordered region spans residues 1 to 70 (MAEAAGEAGA…PAAPESGTIP (70 aa)). Residues 10 to 19 (ASERDPDAVR) show a composition bias toward basic and acidic residues. A compositionally biased stretch (low complexity) spans 49–64 (AASAAGASPAASPAAP). Serine 51 and serine 56 each carry phosphoserine. Lysine 88 is modified (N6-acetyllysine). The region spanning 188–370 (FERIPDIVVW…TEATIKIRPT (183 aa)) is the FAD-binding PCMH-type domain. FAD-binding positions include 220 to 226 (PIGGGTS), 289 to 295 (DSLEFSI), and 302 to 305 (TRAS). Lysine 333 carries the post-translational modification N6-acetyllysine. An FAD-binding site is contributed by 354-360 (EGTLGVI). A substrate-binding site is contributed by arginine 501. Tyrosine 564 (proton donor/acceptor) is an active-site residue. 2 important for enzyme activity regions span residues 601–603 (HHH) and 640–644 (NRNLL).

Belongs to the FAD-binding oxidoreductase/transferase type 4 family. Homodimer. FAD is required as a cofactor.

It localises to the peroxisome membrane. The protein localises to the peroxisome. It carries out the reaction a long chain fatty alcohol + a 1-acylglycerone 3-phosphate = a 1-O-alkylglycerone 3-phosphate + a long-chain fatty acid + H(+). It catalyses the reaction hexadecan-1-ol + 1-hexadecanoylglycerone 3-phosphate = 1-O-hexadecylglycerone 3-phosphate + hexadecanoate + H(+). The enzyme catalyses 1-hexadecanoylglycerone 3-phosphate + a long-chain fatty acid = a 1-acylglycerone 3-phosphate + hexadecanoate. Its pathway is glycerolipid metabolism; ether lipid biosynthesis. Its activity is regulated as follows. Inhibited by divalent cation Mg(2+). Functionally, catalyzes the exchange of the acyl chain in acyl-dihydroxyacetonephosphate (acyl-DHAP) for a long chain fatty alcohol, yielding the first ether linked intermediate, i.e. alkyl-dihydroxyacetonephosphate (alkyl-DHAP), in the pathway of ether lipid biosynthesis. The protein is Alkyldihydroxyacetonephosphate synthase, peroxisomal (Agps) of Rattus norvegicus (Rat).